The primary structure comprises 145 residues: uncharacterized protein (145 aa).

This is an uncharacterized protein from Sinorhizobium fredii (strain NBRC 101917 / NGR234).